A 275-amino-acid polypeptide reads, in one-letter code: TATA-box-binding protein (275 aa).

Disordered stretches follow at residues 23–45 (EDES…FGMN) and 73–92 (GSMS…HTPA). 2 repeat units span residues 103–179 (LENI…ARIV) and 193–270 (IQNM…YPIL).

This sequence belongs to the TBP family. As to quaternary structure, belongs to the TFIID complex together with the TBP-associated factors (TAFs). Binds DNA as monomer.

It localises to the nucleus. Functionally, general transcription factor that functions at the core of the DNA-binding multiprotein factor TFIID. Binding of TFIID to the TATA box is the initial transcriptional step of the pre-initiation complex (PIC), playing a role in the activation of eukaryotic genes transcribed by RNA polymerase II. This is TATA-box-binding protein from Artemia franciscana (Brine shrimp).